The chain runs to 58 residues: Ribosome biogenesis protein Nop10 (58 aa).

This sequence belongs to the NOP10 family.

In terms of biological role, involved in ribosome biogenesis; more specifically in 18S rRNA pseudouridylation and in cleavage of pre-rRNA. This chain is Ribosome biogenesis protein Nop10, found in Thermococcus onnurineus (strain NA1).